Consider the following 260-residue polypeptide: Large ribosomal subunit protein uL2 (260 aa).

A disordered region spans residues 1–24 (MGRVIRAQRKGAGSVFKSHTHHRK).

This sequence belongs to the universal ribosomal protein uL2 family.

Its subcellular location is the cytoplasm. The sequence is that of Large ribosomal subunit protein uL2 (RPL8) from Solanum lycopersicum (Tomato).